The primary structure comprises 502 residues: ATP synthase subunit alpha (502 aa).

169–176 (GDRQTGKT) is a binding site for ATP.

This sequence belongs to the ATPase alpha/beta chains family. As to quaternary structure, F-type ATPases have 2 components, CF(1) - the catalytic core - and CF(0) - the membrane proton channel. CF(1) has five subunits: alpha(3), beta(3), gamma(1), delta(1), epsilon(1). CF(0) has three main subunits: a(1), b(2) and c(9-12). The alpha and beta chains form an alternating ring which encloses part of the gamma chain. CF(1) is attached to CF(0) by a central stalk formed by the gamma and epsilon chains, while a peripheral stalk is formed by the delta and b chains.

Its subcellular location is the cell inner membrane. The catalysed reaction is ATP + H2O + 4 H(+)(in) = ADP + phosphate + 5 H(+)(out). Functionally, produces ATP from ADP in the presence of a proton gradient across the membrane. The alpha chain is a regulatory subunit. The protein is ATP synthase subunit alpha of Solidesulfovibrio magneticus (strain ATCC 700980 / DSM 13731 / RS-1) (Desulfovibrio magneticus).